The following is a 493-amino-acid chain: Lysostaphin (493 aa).

A signal peptide spans 1 to 23 (MKKTKNNYYTRPLAIGLSTFALA). Positions 24–247 (SIVYGGIQNE…ALVQNRTALR (224 aa)) are excised as a propeptide. 14 consecutive repeat copies span residues 49–61 (AEVE…VENT), 62–74 (AEVE…VENT), 75–87 (AEVE…VENT), 88–100 (AEVE…VENT), 101–113 (AEVE…VENT), 114–126 (AEVE…VENT), 127–139 (AEVE…VENT), 140–152 (AEVE…VENT), 153–165 (AEVE…VENT), 166–178 (AEVE…VENT), 179–191 (AEVE…VENT), 192–204 (AEVE…VENT), 205–217 (AEVE…VENT), and 218–230 (AEVE…VENT). The segment at 49–243 (AEVETSKAPV…ETSKALVQNR (195 aa)) is 15 X 13 AA approximate tandem repeats of A-E-V-E-T-S-K-A-P-V-E-N-T. The tract at residues 52-232 (ETSKAPVENT…SKAPVENTAE (181 aa)) is disordered. A 15; approximate repeat occupies 231-243 (AEVETSKALVQNR). Positions 279 and 283 each coordinate Zn(2+). H360 is an active-site residue. Residue H362 coordinates Zn(2+). Residues 413 to 481 (SESASFTPNT…YLPVRTWNKS (69 aa)) form the SH3b domain.

The protein belongs to the peptidase M23B family. In terms of assembly, monomer. Requires Zn(2+) as cofactor.

It is found in the secreted. The enzyme catalyses Hydrolysis of the -Gly-|-Gly- bond in the pentaglycine inter-peptide link joining staphylococcal cell wall peptidoglycans.. In terms of biological role, lyses staphylococcal cells by hydrolyzing the polyglycine interpeptide bridges of the peptidoglycan. The protein is Lysostaphin (lss) of Staphylococcus simulans.